Reading from the N-terminus, the 385-residue chain is ADP,ATP carrier protein 2, mitochondrial (385 aa).

The N-terminal 74 residues, M1–Q74, are a transit peptide targeting the mitochondrion. Solcar repeat units follow at residues T82–L175, K187–V280, and D288–I374. A run of 5 helical transmembrane segments spans residues F84–L111, T152–F176, Y185–L205, F256–V277, and F291–I311. Positions 157 and 169 each coordinate ADP. R315 lines the ADP pocket. Residues R315–M320 form an important for transport activity region. The short motif at R315 to M320 is the Nucleotide carrier signature motif element. The helical transmembrane segment at A351 to L371 threads the bilayer.

It belongs to the mitochondrial carrier (TC 2.A.29) family. Monomer.

Its subcellular location is the mitochondrion inner membrane. The catalysed reaction is ADP(in) + ATP(out) = ADP(out) + ATP(in). The matrix-open state (m-state) is inhibited by the membrane-permeable bongkrekic acid (BKA). The cytoplasmic-open state (c-state) is inhibited by the membrane-impermeable toxic inhibitor carboxyatractyloside (CATR). Its function is as follows. ADP:ATP antiporter that mediates import of ADP into the mitochondrial matrix for ATP synthesis, and export of ATP out to fuel the cell. Cycles between the cytoplasmic-open state (c-state) and the matrix-open state (m-state): operates by the alternating access mechanism with a single substrate-binding site intermittently exposed to either the cytosolic (c-state) or matrix (m-state) side of the inner mitochondrial membrane. The polypeptide is ADP,ATP carrier protein 2, mitochondrial (AAC2) (Arabidopsis thaliana (Mouse-ear cress)).